The chain runs to 394 residues: Elongation factor Tu 2 (394 aa).

A tr-type G domain is found at 10 to 204 (KPHVNVGTIG…ALDSYIPEPE (195 aa)). A G1 region spans residues 19–26 (GHVDHGKT). Residue 19-26 (GHVDHGKT) participates in GTP binding. Thr-26 provides a ligand contact to Mg(2+). The segment at 60-64 (GITIN) is G2. The interval 81–84 (DCPG) is G3. GTP contacts are provided by residues 81–85 (DCPGH) and 136–139 (NKCD). A G4 region spans residues 136–139 (NKCD). The tract at residues 174–176 (SAL) is G5.

The protein belongs to the TRAFAC class translation factor GTPase superfamily. Classic translation factor GTPase family. EF-Tu/EF-1A subfamily. As to quaternary structure, monomer.

It is found in the cytoplasm. The catalysed reaction is GTP + H2O = GDP + phosphate + H(+). Functionally, GTP hydrolase that promotes the GTP-dependent binding of aminoacyl-tRNA to the A-site of ribosomes during protein biosynthesis. The chain is Elongation factor Tu 2 from Shewanella oneidensis (strain ATCC 700550 / JCM 31522 / CIP 106686 / LMG 19005 / NCIMB 14063 / MR-1).